The primary structure comprises 347 residues: Endophilin-A3 (347 aa).

Residues 1-21 are membrane-binding amphipathic helix; that stretch reads MSVAGLKKQFHKASQLFSEKI. A BAR domain is found at 18 to 249; sequence SEKISGAEGT…LELRISLASK (232 aa). Residues 60-87 are required for dimerization upon membrane association; it reads PNPAYRAKLGMLNTVSKLRGQVKATGYP. A coiled-coil region spans residues 180 to 201; that stretch reads EEEIRQAVEKFEESKELAERSM. An interaction with ARC region spans residues 218–254; the sequence is FVEAALDYHRQSTEILQELQSKLELRISLASKVPKRE. Residues 255 to 288 are disordered; the sequence is FMPKPVNMSSTDANGVGPSSSSKTPGTDTPADQP. A compositionally biased stretch (polar residues) spans 261 to 281; sequence NMSSTDANGVGPSSSSKTPGT. In terms of domain architecture, SH3 spans 285–344; it reads ADQPCCRGLYDFEPENEGELGFKEGDIITLTNQIDENWYEGMLRGESGFFPINYVEVIVP.

Belongs to the endophilin family. Interacts with ARC, DNM1, SGIP1, SYNJ1 and DYDC1. Interacts with FASLG. Interacts with ATXN2. Interacts with BIN2.

The protein resides in the cytoplasm. Its subcellular location is the early endosome membrane. Its function is as follows. Implicated in endocytosis. May recruit other proteins to membranes with high curvature. The chain is Endophilin-A3 (Sh3gl3) from Mus musculus (Mouse).